We begin with the raw amino-acid sequence, 292 residues long: Elongation factor Ts (292 aa).

The involved in Mg(2+) ion dislocation from EF-Tu stretch occupies residues Thr79–Val82.

It belongs to the EF-Ts family.

Its subcellular location is the cytoplasm. Associates with the EF-Tu.GDP complex and induces the exchange of GDP to GTP. It remains bound to the aminoacyl-tRNA.EF-Tu.GTP complex up to the GTP hydrolysis stage on the ribosome. The sequence is that of Elongation factor Ts (tsf) from Idiomarina loihiensis (strain ATCC BAA-735 / DSM 15497 / L2-TR).